We begin with the raw amino-acid sequence, 367 residues long: DNA replication and repair protein RecF (367 aa).

30–37 is an ATP binding site; that stretch reads GDNAQGKT.

It belongs to the RecF family.

It localises to the cytoplasm. Functionally, the RecF protein is involved in DNA metabolism; it is required for DNA replication and normal SOS inducibility. RecF binds preferentially to single-stranded, linear DNA. It also seems to bind ATP. The chain is DNA replication and repair protein RecF from Clostridium beijerinckii (strain ATCC 51743 / NCIMB 8052) (Clostridium acetobutylicum).